Reading from the N-terminus, the 430-residue chain is Protein translocase subunit SecY (430 aa).

10 consecutive transmembrane segments (helical) span residues 18 to 38 (IFFT…PAPG), 68 to 88 (FSIF…MQLL), 117 to 137 (LAIS…NNYL), 147 to 167 (IMSY…LIWL), 179 to 199 (GISI…LIQF), 217 to 237 (VLGL…VLEA), 269 to 289 (GVIP…LTLF), 308 to 328 (NVGM…YAFV), 368 to 388 (FVGS…TKFM), and 389 to 409 (GLPQ…GVAI).

Belongs to the SecY/SEC61-alpha family. In terms of assembly, component of the Sec protein translocase complex. Heterotrimer consisting of SecY, SecE and SecG subunits. The heterotrimers can form oligomers, although 1 heterotrimer is thought to be able to translocate proteins. Interacts with the ribosome. Interacts with SecDF, and other proteins may be involved. Interacts with SecA.

Its subcellular location is the cell membrane. In terms of biological role, the central subunit of the protein translocation channel SecYEG. Consists of two halves formed by TMs 1-5 and 6-10. These two domains form a lateral gate at the front which open onto the bilayer between TMs 2 and 7, and are clamped together by SecE at the back. The channel is closed by both a pore ring composed of hydrophobic SecY resides and a short helix (helix 2A) on the extracellular side of the membrane which forms a plug. The plug probably moves laterally to allow the channel to open. The ring and the pore may move independently. This is Protein translocase subunit SecY from Staphylococcus aureus (strain NCTC 8325 / PS 47).